Reading from the N-terminus, the 1343-residue chain is DNA-directed RNA polymerase subunit beta (1343 aa).

This sequence belongs to the RNA polymerase beta chain family. As to quaternary structure, the RNAP catalytic core consists of 2 alpha, 1 beta, 1 beta' and 1 omega subunit. When a sigma factor is associated with the core the holoenzyme is formed, which can initiate transcription.

The enzyme catalyses RNA(n) + a ribonucleoside 5'-triphosphate = RNA(n+1) + diphosphate. In terms of biological role, DNA-dependent RNA polymerase catalyzes the transcription of DNA into RNA using the four ribonucleoside triphosphates as substrates. This is DNA-directed RNA polymerase subunit beta from Shewanella sediminis (strain HAW-EB3).